The following is a 957-amino-acid chain: Glycine dehydrogenase (decarboxylating) (957 aa).

Lysine 708 bears the N6-(pyridoxal phosphate)lysine mark.

It belongs to the GcvP family. As to quaternary structure, the glycine cleavage system is composed of four proteins: P, T, L and H. Requires pyridoxal 5'-phosphate as cofactor.

It catalyses the reaction N(6)-[(R)-lipoyl]-L-lysyl-[glycine-cleavage complex H protein] + glycine + H(+) = N(6)-[(R)-S(8)-aminomethyldihydrolipoyl]-L-lysyl-[glycine-cleavage complex H protein] + CO2. Its function is as follows. The glycine cleavage system catalyzes the degradation of glycine. The P protein binds the alpha-amino group of glycine through its pyridoxal phosphate cofactor; CO(2) is released and the remaining methylamine moiety is then transferred to the lipoamide cofactor of the H protein. The polypeptide is Glycine dehydrogenase (decarboxylating) (Shigella boydii serotype 4 (strain Sb227)).